The following is a 242-amino-acid chain: Carboxy-S-adenosyl-L-methionine synthase (242 aa).

S-adenosyl-L-methionine-binding positions include Tyr39, 64–66, 89–90, 117–118, Asn132, and Arg199; these read GCS, DN, and DI.

Belongs to the class I-like SAM-binding methyltransferase superfamily. Cx-SAM synthase family. Homodimer.

It catalyses the reaction prephenate + S-adenosyl-L-methionine = carboxy-S-adenosyl-L-methionine + 3-phenylpyruvate + H2O. Functionally, catalyzes the conversion of S-adenosyl-L-methionine (SAM) to carboxy-S-adenosyl-L-methionine (Cx-SAM). This chain is Carboxy-S-adenosyl-L-methionine synthase, found in Vibrio atlanticus (strain LGP32) (Vibrio splendidus (strain Mel32)).